We begin with the raw amino-acid sequence, 442 residues long: MKLQYLVALLSVQAVPPVTAGYIHQYALVGSAIRQPIDQKTQREDLNKLVSDSPLLSLHRTICEIESVSNREGAVGEVLLKYLRDRGFTVEKQIVPADRGTNSTAERFNIWAYPKGCPRPKIILTSHIDTVPPHIKYSLHAPDGDFDRAKVRIMGRGTVDAKASVAAQIIAALKHLKSNKDIPLGLLFVVSEEVGGSGMVHFSNSELNTNPPFFHTLIFGEPTDLTLVDGHKGNLRVTIEAKGVAAHSGYPWLGRSAISEILPILARMDELGDIPVETGGLPSSEKYGRTTVNIGTIKGGAADNVVPETASASIAVRLAAGTPEEAEEIIRRAVYDVSGGSTNITVNFPDSMPYPPIDLDVDVEGFDISTVNYGTDIPKLEIHDEELEVKVKRYLYGPGTIFVAHGAEEGITVGDLEKAVEGYSKLIDAAVKRGWPREVVVN.

The N-terminal stretch at 1–20 (MKLQYLVALLSVQAVPPVTA) is a signal peptide. The N-linked (GlcNAc...) asparagine glycan is linked to N102. Residue D160 coordinates Zn(2+). The active-site Proton acceptor is the E192. E193 provides a ligand contact to Zn(2+). N343 is a glycosylation site (N-linked (GlcNAc...) asparagine).

It belongs to the peptidase M20A family. Zn(2+) is required as a cofactor.

The protein resides in the secreted. The protein is Probable carboxypeptidase PABG_01461 of Paracoccidioides brasiliensis (strain Pb03).